The sequence spans 87 residues: Potassium channel toxin Ttr-beta-KTx (87 aa).

The N-terminal stretch at 1–19 is a signal peptide; the sequence is MERKWALLLFLGMVTLVSC. Positions 20-27 are excised as a propeptide; the sequence is GLREKHVQ. Residues 53–87 form the BetaSPN-type CS-alpha/beta domain; sequence QFGCPAYEGYCNNHCQDIKRKDGECHGFKCKCAKD. Intrachain disulfides connect Cys56–Cys77, Cys63–Cys82, and Cys67–Cys84.

The protein belongs to the long chain scorpion toxin family. Class 1 subfamily. Expressed by the venom gland.

The protein localises to the secreted. In terms of biological role, inhibits voltage-gated potassium channel. The polypeptide is Potassium channel toxin Ttr-beta-KTx (Tityus trivittatus (Argentinean scorpion)).